A 376-amino-acid polypeptide reads, in one-letter code: RCC1 domain-containing protein 1 (376 aa).

The tract at residues 1-169 (MAEERPGAWF…ARQLELGAEH (169 aa)) is interaction with KDM8. The stretch at 6–56 (PGAWFGFGFCGFGQELGSGRGRQVHSPSPLRAGVDICRVSASWSYTAFVTR) is one RCC1 1 repeat. Arg141 bears the (3R)-3-hydroxyarginine mark. 3 RCC1 repeats span residues 176-227 (AGQV…CVSE), 229-317 (GDIY…VVTR), and 318-371 (TGEL…VYAV).

As to quaternary structure, found in a complex with KDM8. Interacts (via N-terminus) with KDM8 (via N-terminus). Post-translationally, specifically hydroxylated (with R stereochemistry) at C-3 of ARG-141 by KDM8.

It localises to the chromosome. Plays a role in transcriptional repression of satellite repeats, possibly by regulating H3K36 methylation levels in centromeric regions together with KDM8. Possibly together with KDM8, is involved in proper mitotic spindle organization and chromosome segregation. Plays a role in regulating alpha-tubulin deacetylation and cytoskeletal microtubule stability, thereby promoting cell migration and TGF-beta-induced epithelial to mesenchymal transition (EMT), potentially through the inhibition of KDM8. In Homo sapiens (Human), this protein is RCC1 domain-containing protein 1.